Consider the following 78-residue polypeptide: Bowman-Birk type proteinase inhibitors I-A, I-B, and I-A' (78 aa).

7 cysteine pairs are disulfide-bonded: Cys-18-Cys-72, Cys-19-Cys-34, Cys-22-Cys-68, Cys-24-Cys-32, Cys-42-Cys-49, Cys-46-Cys-61, and Cys-51-Cys-59.

Belongs to the Bowman-Birk serine protease inhibitor family.

In terms of biological role, these inhibitors strongly inhibit trypsin. In Phaseolus angularis (Azuki bean), this protein is Bowman-Birk type proteinase inhibitors I-A, I-B, and I-A'.